The primary structure comprises 450 residues: tRNA-2-methylthio-N(6)-dimethylallyladenosine synthase (450 aa).

Residues 8 to 128 form the MTTase N-terminal domain; the sequence is KRLYIKTYGC…LPELIARAHR (121 aa). The [4Fe-4S] cluster site is built by Cys-17, Cys-53, Cys-91, Cys-166, Cys-170, and Cys-173. The region spanning 152–382 is the Radical SAM core domain; sequence RPTGVTAFLT…QALLEQQQLA (231 aa). A TRAM domain is found at 385–447; that stretch reads AAQAGRVLPV…RNSLAGVLEL (63 aa).

The protein belongs to the methylthiotransferase family. MiaB subfamily. In terms of assembly, monomer. [4Fe-4S] cluster serves as cofactor.

It localises to the cytoplasm. The catalysed reaction is N(6)-dimethylallyladenosine(37) in tRNA + (sulfur carrier)-SH + AH2 + 2 S-adenosyl-L-methionine = 2-methylsulfanyl-N(6)-dimethylallyladenosine(37) in tRNA + (sulfur carrier)-H + 5'-deoxyadenosine + L-methionine + A + S-adenosyl-L-homocysteine + 2 H(+). Functionally, catalyzes the methylthiolation of N6-(dimethylallyl)adenosine (i(6)A), leading to the formation of 2-methylthio-N6-(dimethylallyl)adenosine (ms(2)i(6)A) at position 37 in tRNAs that read codons beginning with uridine. The protein is tRNA-2-methylthio-N(6)-dimethylallyladenosine synthase of Phenylobacterium zucineum (strain HLK1).